The chain runs to 526 residues: Bifunctional purine biosynthesis protein PurH (526 aa).

The MGS-like domain occupies 1–147 (MPSIKRALIS…KNWKHVAIVT (147 aa)).

Belongs to the PurH family.

It carries out the reaction (6R)-10-formyltetrahydrofolate + 5-amino-1-(5-phospho-beta-D-ribosyl)imidazole-4-carboxamide = 5-formamido-1-(5-phospho-D-ribosyl)imidazole-4-carboxamide + (6S)-5,6,7,8-tetrahydrofolate. The enzyme catalyses IMP + H2O = 5-formamido-1-(5-phospho-D-ribosyl)imidazole-4-carboxamide. Its pathway is purine metabolism; IMP biosynthesis via de novo pathway; 5-formamido-1-(5-phospho-D-ribosyl)imidazole-4-carboxamide from 5-amino-1-(5-phospho-D-ribosyl)imidazole-4-carboxamide (10-formyl THF route): step 1/1. It functions in the pathway purine metabolism; IMP biosynthesis via de novo pathway; IMP from 5-formamido-1-(5-phospho-D-ribosyl)imidazole-4-carboxamide: step 1/1. The sequence is that of Bifunctional purine biosynthesis protein PurH from Neisseria meningitidis serogroup C / serotype 2a (strain ATCC 700532 / DSM 15464 / FAM18).